The primary structure comprises 185 residues: Shikimate kinase (185 aa).

ATP is bound at residue 15 to 20; the sequence is GAGKST. Mg(2+) is bound at residue serine 19. Positions 37, 61, and 83 each coordinate substrate. Arginine 121 contacts ATP. Residue arginine 146 participates in substrate binding.

This sequence belongs to the shikimate kinase family. As to quaternary structure, monomer. Mg(2+) serves as cofactor.

The protein resides in the cytoplasm. The catalysed reaction is shikimate + ATP = 3-phosphoshikimate + ADP + H(+). The protein operates within metabolic intermediate biosynthesis; chorismate biosynthesis; chorismate from D-erythrose 4-phosphate and phosphoenolpyruvate: step 5/7. Catalyzes the specific phosphorylation of the 3-hydroxyl group of shikimic acid using ATP as a cosubstrate. The sequence is that of Shikimate kinase from Blochmanniella floridana.